A 204-amino-acid polypeptide reads, in one-letter code: Imidazoleglycerol-phosphate dehydratase (204 aa).

Belongs to the imidazoleglycerol-phosphate dehydratase family.

It localises to the cytoplasm. The catalysed reaction is D-erythro-1-(imidazol-4-yl)glycerol 3-phosphate = 3-(imidazol-4-yl)-2-oxopropyl phosphate + H2O. Its pathway is amino-acid biosynthesis; L-histidine biosynthesis; L-histidine from 5-phospho-alpha-D-ribose 1-diphosphate: step 6/9. The protein is Imidazoleglycerol-phosphate dehydratase of Rhodococcus erythropolis (strain PR4 / NBRC 100887).